Here is a 187-residue protein sequence, read N- to C-terminus: Elongation factor P (187 aa).

Belongs to the elongation factor P family.

It localises to the cytoplasm. The protein operates within protein biosynthesis; polypeptide chain elongation. Functionally, involved in peptide bond synthesis. Stimulates efficient translation and peptide-bond synthesis on native or reconstituted 70S ribosomes in vitro. Probably functions indirectly by altering the affinity of the ribosome for aminoacyl-tRNA, thus increasing their reactivity as acceptors for peptidyl transferase. The sequence is that of Elongation factor P from Chelativorans sp. (strain BNC1).